The sequence spans 246 residues: 1-(5-phosphoribosyl)-5-[(5-phosphoribosylamino)methylideneamino] imidazole-4-carboxamide isomerase (246 aa).

Residue aspartate 7 is the Proton acceptor of the active site. Aspartate 129 functions as the Proton donor in the catalytic mechanism.

This sequence belongs to the HisA/HisF family.

It localises to the cytoplasm. The enzyme catalyses 1-(5-phospho-beta-D-ribosyl)-5-[(5-phospho-beta-D-ribosylamino)methylideneamino]imidazole-4-carboxamide = 5-[(5-phospho-1-deoxy-D-ribulos-1-ylimino)methylamino]-1-(5-phospho-beta-D-ribosyl)imidazole-4-carboxamide. The protein operates within amino-acid biosynthesis; L-histidine biosynthesis; L-histidine from 5-phospho-alpha-D-ribose 1-diphosphate: step 4/9. The protein is 1-(5-phosphoribosyl)-5-[(5-phosphoribosylamino)methylideneamino] imidazole-4-carboxamide isomerase of Buchnera aphidicola subsp. Acyrthosiphon pisum (strain Tuc7).